The sequence spans 1172 residues: WD repeat-containing protein 48 homolog (1172 aa).

The tract at residues 1–115 (MYEYYSTGKI…HSYGGGGGGT (115 aa)) is disordered. A compositionally biased stretch (polar residues) spans 13–36 (LPQQVDSNGINSKPMNSSPSTPIP). Over residues 37–63 (NNNNNNNNNNNNNNNNNNNNNNNNNNN) the composition is skewed to low complexity. Polar residues predominate over residues 64–89 (RNKSQQSFYLNNNNRNCGFSSPTKPQ). The segment covering 90-107 (YNNNNNNNNNNNSNYNHS) has biased composition (low complexity). 7 WD repeats span residues 152 to 202 (RHCF…GFKF), 208 to 246 (DHTD…CVNS), 249 to 548 (FHDD…SPMF), 560 to 599 (GEGI…KIFK), 602 to 641 (GHTD…CIQV), 645 to 683 (LHTD…QSRL), and 686 to 727 (RENE…NQSI). Residues 341–365 (ISTNNNNNNSSSSNNNNNNNNNNNN) show a composition bias toward low complexity. A disordered region spans residues 341–544 (ISTNNNNNNS…NDNNNLNKKF (204 aa)). Composition is skewed to polar residues over residues 366–377 (GQTNTHENTAET), 388–408 (QLSS…NFRN), and 417–434 (PPSS…SNGR). Low complexity predominate over residues 435–485 (NVNNRENNNNNNNNNNNNNNNNNNNNNNNNNNNNNNNNNINNNNHENNGNV). Acidic residues predominate over residues 486–503 (DVDDEDDDDDDDDDDDDD). Residues 504–513 (CNKNKKKYDD) are compositionally biased toward basic and acidic residues. Over residues 514–543 (NNNNNNYNNNNNKKNNSNDNNNDNNNLNKK) the composition is skewed to low complexity. Over residues 745–769 (NNNNNNNNNNNNNNNNNNNNNNNNN) the composition is skewed to low complexity. The segment at 745 to 775 (NNNNNNNNNNNNNNNNNNNNNNNNNNREKLS) is disordered. Residues 794–833 (QGRAGIIKNQVLNNRRQVLTKDNDNNVQLWDITKGKEIES) form a WD 8 repeat. Residues 926–986 (ELNHSNDSVN…TNSTTPNSGR (61 aa)) are disordered. Residues 930–984 (SNDSVNSSLSSNTSGDNNNNNYNNYNNYNNNNNNGLQKSSSSSSIVSTNSTTPNS) are compositionally biased toward low complexity.

Belongs to the WD repeat WDR48 family.

This chain is WD repeat-containing protein 48 homolog, found in Dictyostelium discoideum (Social amoeba).